The following is a 191-amino-acid chain: Peptidyl-tRNA hydrolase (191 aa).

Tyr17 contributes to the tRNA binding site. Catalysis depends on His22, which acts as the Proton acceptor. TRNA-binding residues include Tyr68, Asn70, and Asn116.

The protein belongs to the PTH family. As to quaternary structure, monomer.

Its subcellular location is the cytoplasm. It catalyses the reaction an N-acyl-L-alpha-aminoacyl-tRNA + H2O = an N-acyl-L-amino acid + a tRNA + H(+). Hydrolyzes ribosome-free peptidyl-tRNAs (with 1 or more amino acids incorporated), which drop off the ribosome during protein synthesis, or as a result of ribosome stalling. Its function is as follows. Catalyzes the release of premature peptidyl moieties from peptidyl-tRNA molecules trapped in stalled 50S ribosomal subunits, and thus maintains levels of free tRNAs and 50S ribosomes. This Francisella tularensis subsp. tularensis (strain FSC 198) protein is Peptidyl-tRNA hydrolase.